Reading from the N-terminus, the 154-residue chain is MAEEEKPPVSESIEDNKDDKKRTIDKVDDSVEDGAEKKPEAAVKNDGETAEKPEKKHKKRRRRQYEDEVPKEKSEDEGEDEEDEDDDGDEINDELADLDDEDDDDLAEIDPANIIPSGRRTRGKVIDFTKAAEKLKEEGKIEDDEGEDGEYGEK.

2 stretches are compositionally biased toward basic and acidic residues: residues 1-54 (MAEE…EKPE) and 64-74 (QYEDEVPKEKS). Disordered regions lie at residues 1-118 (MAEE…IPSG) and 135-154 (LKEE…YGEK). Composition is skewed to acidic residues over residues 75-108 (EDEG…DLAE) and 140-154 (KIED…YGEK).

This sequence belongs to the CHZ1 family. As to quaternary structure, forms a heterotrimer with H2A.Z-H2B, stabilizing the association of the histone dimer. Also, with a lower affinity, forms a heterotrimer with H2A-H2B.

Its subcellular location is the nucleus. Forms a chaperone-bound H2A.Z-H2B complex that acts as a source for SWR1 complex-dependent H2A to H2A.Z histone replacement in chromatin. The sequence is that of Histone H2A.Z-specific chaperone CHZ1 (CHZ1) from Meyerozyma guilliermondii (strain ATCC 6260 / CBS 566 / DSM 6381 / JCM 1539 / NBRC 10279 / NRRL Y-324) (Yeast).